Here is a 221-residue protein sequence, read N- to C-terminus: DDLPDSIDWRENGAVVPVKNQGGCGSCWAFSTVAAVEGINQIVTGDLISLSEQQLVDCTTANHGCRGGWMNPAFQFIVNNGGINSEETYPYRGQDGICNSTVNAPVVSIDSYENVPSHNEQSLQKAVANQPVSVTMDAAGRDFQLYRSGIFTGSCNISANHALTVVGYGTENDKDFWIVKNSWGKNWGESGYIRAERNIENPDGKCGITRFASYPVKKGTN.

2 disulfide bridges follow: Cys-24-Cys-65 and Cys-58-Cys-98. Residue Cys-27 is part of the active site. Asn-99 and Asn-156 each carry an N-linked (GlcNAc...) asparagine glycan. Cys-155 and Cys-206 are oxidised to a cystine. His-161 is a catalytic residue.

The protein belongs to the peptidase C1 family.

The catalysed reaction is Preferential cleavage of peptides with a proline residue at the P2 position.. Functionally, cysteine proteinase with a specific activity toward peptides with a proline residue at the P2 position. The protein is Zingipain-2 of Zingiber officinale (Ginger).